Reading from the N-terminus, the 307-residue chain is Fructokinase (307 aa).

It belongs to the carbohydrate kinase PfkB family.

It carries out the reaction D-fructose + ATP = D-fructose 6-phosphate + ADP + H(+). The chain is Fructokinase (scrK) from Vibrio alginolyticus.